The sequence spans 471 residues: UDP-N-acetylmuramoylalanine--D-glutamate ligase (471 aa).

Position 127–133 (glycine 127–threonine 133) interacts with ATP.

This sequence belongs to the MurCDEF family.

Its subcellular location is the cytoplasm. It carries out the reaction UDP-N-acetyl-alpha-D-muramoyl-L-alanine + D-glutamate + ATP = UDP-N-acetyl-alpha-D-muramoyl-L-alanyl-D-glutamate + ADP + phosphate + H(+). It participates in cell wall biogenesis; peptidoglycan biosynthesis. Its function is as follows. Cell wall formation. Catalyzes the addition of glutamate to the nucleotide precursor UDP-N-acetylmuramoyl-L-alanine (UMA). This is UDP-N-acetylmuramoylalanine--D-glutamate ligase from Colwellia psychrerythraea (strain 34H / ATCC BAA-681) (Vibrio psychroerythus).